The sequence spans 724 residues: Golgin subfamily A member 6-like protein 6 (724 aa).

Disordered regions lie at residues 1 to 108, 314 to 342, 374 to 454, 517 to 548, and 561 to 724; these read MLMW…HQEA, QEEK…MRRQ, MHEQ…EMWR, QEEM…KMWR, and WRQE…MQEH. Over residues 15 to 29 the composition is skewed to basic residues; it reads LPTHPHLPTHPHLPT. Over residues 39–60 the composition is skewed to basic and acidic residues; the sequence is MSKETRQSKLAEAKEQLTDHHP. Composition is skewed to polar residues over residues 61 to 71 and 79 to 91; these read QTNPSVGTAAS and NNGT…TSGG. A compositionally biased stretch (basic and acidic residues) spans 94 to 108; that stretch reads SPEDEQKASHQHQEA. Residues 164 to 686 are a coiled coil; sequence ELEQALSAVA…EKMWEQEEKM (523 aa).

It belongs to the GOLGA6 family.

This Homo sapiens (Human) protein is Golgin subfamily A member 6-like protein 6 (GOLGA6L6).